The primary structure comprises 668 residues: DNA ligase (668 aa).

Residues D31–D35, S80–L81, and E111 each bind NAD(+). Catalysis depends on K113, which acts as the N6-AMP-lysine intermediate. NAD(+)-binding residues include R134, E170, K285, and K309. Residues C403, C406, C421, and C427 each coordinate Zn(2+). One can recognise a BRCT domain in the interval N587 to E668.

It belongs to the NAD-dependent DNA ligase family. LigA subfamily. It depends on Mg(2+) as a cofactor. Mn(2+) serves as cofactor.

The enzyme catalyses NAD(+) + (deoxyribonucleotide)n-3'-hydroxyl + 5'-phospho-(deoxyribonucleotide)m = (deoxyribonucleotide)n+m + AMP + beta-nicotinamide D-nucleotide.. In terms of biological role, DNA ligase that catalyzes the formation of phosphodiester linkages between 5'-phosphoryl and 3'-hydroxyl groups in double-stranded DNA using NAD as a coenzyme and as the energy source for the reaction. It is essential for DNA replication and repair of damaged DNA. The protein is DNA ligase of Flavobacterium johnsoniae (strain ATCC 17061 / DSM 2064 / JCM 8514 / BCRC 14874 / CCUG 350202 / NBRC 14942 / NCIMB 11054 / UW101) (Cytophaga johnsonae).